Here is a 243-residue protein sequence, read N- to C-terminus: Cytochrome c1, heme protein (243 aa).

Topologically, residues 1-201 are mitochondrial intermembrane; sequence GVDSHPPALP…CSNPWWDERK (201 aa). Residues 5-194 enclose the Cytochrome c domain; sequence HPPALPWPHF…VTCFLEWCSN (190 aa). 3 residues coordinate heme: cysteine 39, histidine 40, and methionine 159. A helical membrane pass occupies residues 202–221; that stretch reads LLGYKTIATLAVIAVSSGYY. The Mitochondrial matrix portion of the chain corresponds to 222–243; it reads NRFLSGLWRSRRLAFRPFNYSK.

This sequence belongs to the cytochrome c family. Component of the ubiquinol-cytochrome c oxidoreductase (cytochrome b-c1 complex, complex III, CIII), a multisubunit enzyme composed of 3 respiratory subunits cytochrome b, cytochrome c1 and Rieske protein, 2 core protein subunits, and additional low-molecular weight protein subunits. The complex exists as an obligatory dimer and forms supercomplexes (SCs) in the inner mitochondrial membrane with cytochrome c oxidase (complex IV, CIV). Heme is required as a cofactor.

The protein localises to the mitochondrion inner membrane. The enzyme catalyses a quinol + 2 Fe(III)-[cytochrome c](out) = a quinone + 2 Fe(II)-[cytochrome c](out) + 2 H(+)(out). In terms of biological role, component of the ubiquinol-cytochrome c oxidoreductase, a multisubunit transmembrane complex that is part of the mitochondrial electron transport chain which drives oxidative phosphorylation. The respiratory chain contains 3 multisubunit complexes succinate dehydrogenase (complex II, CII), ubiquinol-cytochrome c oxidoreductase (cytochrome b-c1 complex, complex III, CIII) and cytochrome c oxidase (complex IV, CIV), that cooperate to transfer electrons derived from NADH and succinate to molecular oxygen, creating an electrochemical gradient over the inner membrane that drives transmembrane transport and the ATP synthase. The cytochrome b-c1 complex catalyzes electron transfer from ubiquinol to cytochrome c, linking this redox reaction to translocation of protons across the mitochondrial inner membrane, with protons being carried across the membrane as hydrogens on the quinol. In the process called Q cycle, 2 protons are consumed from the matrix, 4 protons are released into the intermembrane space and 2 electrons are passed to cytochrome c. Cytochrome c1 is a catalytic core subunit containing a c-type heme. It transfers electrons from the [2Fe-2S] iron-sulfur cluster of the Rieske protein to cytochrome c. This Euglena gracilis protein is Cytochrome c1, heme protein.